We begin with the raw amino-acid sequence, 82 residues long: ATP synthase subunit c, chloroplastic (82 aa).

The next 2 helical transmembrane spans lie at 4–24 (IISA…AIGP) and 57–77 (LAFM…LLFA).

It belongs to the ATPase C chain family. In terms of assembly, F-type ATPases have 2 components, F(1) - the catalytic core - and F(0) - the membrane proton channel. F(1) has five subunits: alpha(3), beta(3), gamma(1), delta(1), epsilon(1). F(0) has four main subunits: a(1), b(1), b'(1) and c(10-14). The alpha and beta chains form an alternating ring which encloses part of the gamma chain. F(1) is attached to F(0) by a central stalk formed by the gamma and epsilon chains, while a peripheral stalk is formed by the delta, b and b' chains.

The protein resides in the plastid. Its subcellular location is the chloroplast thylakoid membrane. F(1)F(0) ATP synthase produces ATP from ADP in the presence of a proton or sodium gradient. F-type ATPases consist of two structural domains, F(1) containing the extramembraneous catalytic core and F(0) containing the membrane proton channel, linked together by a central stalk and a peripheral stalk. During catalysis, ATP synthesis in the catalytic domain of F(1) is coupled via a rotary mechanism of the central stalk subunits to proton translocation. In terms of biological role, key component of the F(0) channel; it plays a direct role in translocation across the membrane. A homomeric c-ring of between 10-14 subunits forms the central stalk rotor element with the F(1) delta and epsilon subunits. This Trieres chinensis (Marine centric diatom) protein is ATP synthase subunit c, chloroplastic.